The primary structure comprises 393 residues: S-adenosylmethionine synthase 2 (393 aa).

E9 is a binding site for Mg(2+). ATP is bound at residue H15. E43 contacts K(+). L-methionine-binding residues include E56 and Q99. ATP-binding positions include 167-169, 235-238, D246, 252-253, A269, K273, and K277; these read DGK, SGRF, and RK. D246 serves as a coordination point for L-methionine. Residue K277 coordinates L-methionine.

Belongs to the AdoMet synthase family. As to quaternary structure, homotetramer. Interacts with GRF3. Requires Mn(2+) as cofactor. It depends on Mg(2+) as a cofactor. Co(2+) is required as a cofactor. K(+) serves as cofactor. Highly expressed in stems and roots. Detected in trichomes (at the protein level).

It localises to the cytoplasm. It catalyses the reaction L-methionine + ATP + H2O = S-adenosyl-L-methionine + phosphate + diphosphate. The protein operates within amino-acid biosynthesis; S-adenosyl-L-methionine biosynthesis; S-adenosyl-L-methionine from L-methionine: step 1/1. Inhibited by 5,5'-dithiobis-2-nitrobenzoic acid (DTNB) and N-ethylmaleimide (NEM) (in vitro). In terms of biological role, catalyzes the formation of S-adenosylmethionine from methionine and ATP. The reaction comprises two steps that are both catalyzed by the same enzyme: formation of S-adenosylmethionine (AdoMet) and triphosphate, and subsequent hydrolysis of the triphosphate. This is S-adenosylmethionine synthase 2 (SAM2) from Arabidopsis thaliana (Mouse-ear cress).